A 256-amino-acid polypeptide reads, in one-letter code: MKPSFVLLSIVLLLSSSLSDAADFGSPSQPPSMAPTPQPSNSTDCSSVIYSMVDCLSFLTVGSTDPSPTKTCCVGVKTVLNYSPKCLCSALESSREMGFVLDDTKALAMPKICNVPIDPNCDVSTPAASTPVSPPVESPTTSPSSAKSPAITPSSPAVSHSPPPVRHSSPPVSHSSPPVSHSSPPTSRSSPAVSHSSPVVAASSPVKAVSSSTASSPRAASPSPSPSPSISSSGILLVSKLFIAVVMVSSFLYILA.

A signal peptide spans 1–21 (MKPSFVLLSIVLLLSSSLSDA). Asn-41 carries N-linked (GlcNAc...) asparagine glycosylation. 4 cysteine pairs are disulfide-bonded: Cys-45-Cys-88, Cys-55-Cys-72, Cys-73-Cys-113, and Cys-86-Cys-121. The interval 125 to 230 (TPAASTPVSP…SPSPSPSPSI (106 aa)) is disordered. Low complexity predominate over residues 138–230 (SPTTSPSSAK…SPSPSPSPSI (93 aa)). Ser-225 is lipidated: GPI-anchor amidated serine. Residues 226–256 (PSPSISSSGILLVSKLFIAVVMVSSFLYILA) constitute a propeptide, removed in mature form.

Belongs to the plant LTP family. In terms of tissue distribution, confined to the anthers of the inflorescence.

Its subcellular location is the cell membrane. Its function is as follows. Probable lipid transfer protein. This is Non-specific lipid transfer protein GPI-anchored 23 from Arabidopsis thaliana (Mouse-ear cress).